We begin with the raw amino-acid sequence, 644 residues long: 1-deoxy-D-xylulose-5-phosphate synthase (644 aa).

Thiamine diphosphate contacts are provided by residues histidine 78 and 120–122 (GHA). Aspartate 150 provides a ligand contact to Mg(2+). Thiamine diphosphate contacts are provided by residues 151–152 (AA), asparagine 179, and glutamate 374. A Mg(2+)-binding site is contributed by asparagine 179.

This sequence belongs to the transketolase family. DXPS subfamily. Homodimer. Mg(2+) serves as cofactor. Requires thiamine diphosphate as cofactor.

It carries out the reaction D-glyceraldehyde 3-phosphate + pyruvate + H(+) = 1-deoxy-D-xylulose 5-phosphate + CO2. It functions in the pathway metabolic intermediate biosynthesis; 1-deoxy-D-xylulose 5-phosphate biosynthesis; 1-deoxy-D-xylulose 5-phosphate from D-glyceraldehyde 3-phosphate and pyruvate: step 1/1. Catalyzes the acyloin condensation reaction between C atoms 2 and 3 of pyruvate and glyceraldehyde 3-phosphate to yield 1-deoxy-D-xylulose-5-phosphate (DXP). This Chlamydia pneumoniae (Chlamydophila pneumoniae) protein is 1-deoxy-D-xylulose-5-phosphate synthase.